An 816-amino-acid polypeptide reads, in one-letter code: Glycerol-3-phosphate acyltransferase (816 aa).

Positions 298 to 303 (CHRSHM) match the HXXXXD motif motif.

It belongs to the GPAT/DAPAT family.

Its subcellular location is the cell membrane. It catalyses the reaction sn-glycerol 3-phosphate + an acyl-CoA = a 1-acyl-sn-glycero-3-phosphate + CoA. Its pathway is phospholipid metabolism; CDP-diacylglycerol biosynthesis; CDP-diacylglycerol from sn-glycerol 3-phosphate: step 1/3. In Hamiltonella defensa subsp. Acyrthosiphon pisum (strain 5AT), this protein is Glycerol-3-phosphate acyltransferase.